A 184-amino-acid polypeptide reads, in one-letter code: Photosystem I assembly protein Ycf4 (184 aa).

2 helical membrane passes run 22–42 (FCWA…GISS) and 57–77 (ILFF…LFIS).

The protein belongs to the Ycf4 family.

It localises to the plastid. It is found in the chloroplast thylakoid membrane. Seems to be required for the assembly of the photosystem I complex. This is Photosystem I assembly protein Ycf4 from Illicium oligandrum (Star anise).